The following is a 757-amino-acid chain: Endonuclease MutS2 (757 aa).

Residue 321–328 participates in ATP binding; sequence GPNMGGKT. Positions 681–756 constitute a Smr domain; it reads IDIRGMTVEE…GTGVTVVEVK (76 aa).

Belongs to the DNA mismatch repair MutS family. MutS2 subfamily. As to quaternary structure, homodimer. Binds to stalled ribosomes, contacting rRNA. Interacts with MutL.

Nuclease activity is stimulated by interaction with MutL and inhibited in the presence of non-hydrolytic ATP (ADPnP). ATPase activity is stimulated by DNA. Endonuclease that is involved in the suppression of homologous recombination and thus may have a key role in the control of bacterial genetic diversity. Has ATPase activity. Binds to DNA. Its function is as follows. Acts as a ribosome collision sensor, splitting the ribosome into its 2 subunits. Detects stalled/collided 70S ribosomes which it binds and splits by an ATP-hydrolysis driven conformational change. Acts upstream of the ribosome quality control system (RQC), a ribosome-associated complex that mediates the extraction of incompletely synthesized nascent chains from stalled ribosomes and their subsequent degradation. Probably generates substrates for RQC. The chain is Endonuclease MutS2 from Thermotoga maritima (strain ATCC 43589 / DSM 3109 / JCM 10099 / NBRC 100826 / MSB8).